Here is a 400-residue protein sequence, read N- to C-terminus: GTPase Obg (400 aa).

Residues 1–159 form the Obg domain; sequence MKFVDEVQIR…RTLKLELLLL (159 aa). An OBG-type G domain is found at 160-333; it reads ADVGMLGLPN…VCYDILDLLD (174 aa). Residues 166-173, 191-195, 213-216, 283-286, and 314-316 each bind GTP; these read GLPNAGKS, FTTLV, DIPG, NKMD, and TAI. Positions 173 and 193 each coordinate Mg(2+).

Belongs to the TRAFAC class OBG-HflX-like GTPase superfamily. OBG GTPase family. In terms of assembly, monomer. Mg(2+) is required as a cofactor.

It is found in the cytoplasm. Its function is as follows. An essential GTPase which binds GTP, GDP and possibly (p)ppGpp with moderate affinity, with high nucleotide exchange rates and a fairly low GTP hydrolysis rate. Plays a role in control of the cell cycle, stress response, ribosome biogenesis and in those bacteria that undergo differentiation, in morphogenesis control. This is GTPase Obg from Aeromonas hydrophila subsp. hydrophila (strain ATCC 7966 / DSM 30187 / BCRC 13018 / CCUG 14551 / JCM 1027 / KCTC 2358 / NCIMB 9240 / NCTC 8049).